The following is an 84-amino-acid chain: M-zodatoxin-Lt2a (84 aa).

Residues 1–22 (MKYFVIALALAVALVCIAESTA) form the signal peptide. Positions 23-58 (YEVNEELENELDDLDDAAWLAVAEELQGLEDFEESR) are excised as a propeptide. Residues 55–58 (EESR) carry the Processing quadruplet motif motif.

In terms of processing, cleavage of the propeptide depends on the processing quadruplet motif (XXXR, with at least one of X being E). Expressed by the venom gland.

The protein resides in the secreted. Functionally, it has antimicrobial activity against Gram-positive bacteria (A.globiformis VKM Ac-1112 (MIC=0.7 uM), and B.subtilis VKM B-501 (MIC=0.4 uM)), Gram-negative bacteria (E.coli DH5-alpha (MIC=1.0 uM), E.coli MH1 (MIC=0.7 uM), and P.aeruginosa PAO1 (MIC=6.7 uM)), and yeasts (P.pastoris GS115 (MIC=6.7 uM), and S.cerevisiae Y190 (MIC=54 uM)). Also has a strong hemolytic activity against rabbit erythrocytes. Causes paralysis, but is not lethal when injected into insect (M.domestica) larvae. The sequence is that of M-zodatoxin-Lt2a from Lachesana tarabaevi (Spider).